A 924-amino-acid chain; its full sequence is Autophagy-related protein 9B (924 aa).

Positions 1 to 144 (MVSRMGWGGR…QDSPGLRVGP (144 aa)) are disordered. Residues 1–207 (MVSRMGWGGR…KIYSYHQRNG (207 aa)) lie on the Cytoplasmic side of the membrane. Over residues 17–27 (WGDLGPGSVPL) the composition is skewed to low complexity. Residues 28 to 40 (LPMPLPPPPPPSC) show a composition bias toward pro residues. A compositionally biased stretch (polar residues) spans 78-88 (LQGTGASQSCH). Low complexity predominate over residues 98 to 113 (PTQAQPAMTPASASPS). Residues 151–154 (YERL) carry the Tyrosine-based sorting signal motif. The chain crosses the membrane as a helical span at residues 208–228 (FACILLEDVFQLGQFIFIVTF). Residues 229–276 (TTFLLRCVDYNVLFANQPSNHTRPGPFHSKVTLSDAILPSAQCAERIR) are Lumenal-facing. The helical transmembrane segment at 277–297 (SSPLLVLLLVLAAGFWLVQLL) threads the bilayer. Residues 298 to 438 (RSVCNLFSYW…GALAARWGRT (141 aa)) are Cytoplasmic-facing. Residues 439-459 (VLLLAALNLALSPLVLAWQVL) lie within the membrane without spanning it. The Cytoplasmic portion of the chain corresponds to 460-526 (HVFYSHVELL…AAPPAPLRTL (67 aa)). Residues 527–547 (LARQLVFFAGALFAALLVLTV) form a helical membrane-spanning segment. At 548-551 (YDED) the chain is on the lumenal side. The chain crosses the membrane as a helical span at residues 552–572 (VLAVEHVLTAMTALGVTATVA). Topologically, residues 573–624 (RSFIPEEQCQGRAPQLLLQTALAHMHYLPEEPGPGGRDRAYRQMAQLLQYRA) are cytoplasmic. The stretch at 625 to 645 (VSLLEELLSPLLTPLFLLFWF) is an intramembrane region. Residues 646-924 (RPRALEIIDF…KEPDRASCTD (279 aa)) are Cytoplasmic-facing. A disordered region spans residues 847–924 (QQEPWGEAAA…KEPDRASCTD (78 aa)). Low complexity predominate over residues 878–890 (SWSSDGSSPASSP). Residues 913–924 (TQKEPDRASCTD) show a composition bias toward basic and acidic residues.

It belongs to the ATG9 family. In terms of assembly, homotrimer; forms a homotrimer with a central pore that forms a path between the two membrane leaflets. Highly expressed in placenta (trophoblast cells) and pituitary gland. Not expressed in vascular endothelial.

It is found in the preautophagosomal structure membrane. It carries out the reaction a 1,2-diacyl-sn-glycero-3-phosphocholine(in) = a 1,2-diacyl-sn-glycero-3-phosphocholine(out). It catalyses the reaction a 1,2-diacyl-sn-glycero-3-phospho-L-serine(in) = a 1,2-diacyl-sn-glycero-3-phospho-L-serine(out). The catalysed reaction is a 1,2-diacyl-sn-glycero-3-phosphoethanolamine(in) = a 1,2-diacyl-sn-glycero-3-phosphoethanolamine(out). Phospholipid scramblase involved in autophagy by mediating autophagosomal membrane expansion. Cycles between the preautophagosomal structure/phagophore assembly site (PAS) and the cytoplasmic vesicle pool and supplies membrane for the growing autophagosome. Lipid scramblase activity plays a key role in preautophagosomal structure/phagophore assembly by distributing the phospholipids that arrive through ATG2 (ATG2A or ATG2B) from the cytoplasmic to the luminal leaflet of the bilayer, thereby driving autophagosomal membrane expansion. In addition to autophagy, also plays a role in necrotic cell death. The polypeptide is Autophagy-related protein 9B (ATG9B) (Homo sapiens (Human)).